A 313-amino-acid chain; its full sequence is Protochlorophyllide reductase (313 aa).

This sequence belongs to the short-chain dehydrogenases/reductases (SDR) family. POR subfamily.

The protein localises to the plastid. It localises to the chloroplast. It carries out the reaction chlorophyllide a + NADP(+) = protochlorophyllide a + NADPH + H(+). It functions in the pathway porphyrin-containing compound metabolism; chlorophyll biosynthesis. Its function is as follows. Phototransformation of protochlorophyllide (Pchlide) to chlorophyllide (Chlide). This chain is Protochlorophyllide reductase, found in Avena sativa (Oat).